We begin with the raw amino-acid sequence, 596 residues long: Pentatricopeptide repeat-containing protein At1g80270, mitochondrial (596 aa).

Residues 1–69 (MFALSKVLRR…RALSSSAGTK (69 aa)) constitute a mitochondrion transit peptide. Residues 62 to 119 (LSSSAGTKSDQEEDDLEDGFSELEGSKSGQGSTSSDEDEGKLSADEEEEEELDLIETD) are disordered. Acidic residues-rich tracts occupy residues 72–82 (QEEDDLEDGFS) and 96–117 (SDED…DLIE). 9 PPR repeats span residues 228–262 (GEVL…GFPL), 263–296 (SGFT…NIKP), 297–331 (SLLT…GVEL), 332–366 (DFQT…SLEA), 367–397 (NRRA…CESK), 399–433 (YFEE…DRRA), 434–468 (SSST…GCRI), 469–503 (EATT…SHTK), and 505–539 (MMNS…GYTS).

It belongs to the PPR family. P subfamily.

Its subcellular location is the mitochondrion. The polypeptide is Pentatricopeptide repeat-containing protein At1g80270, mitochondrial (Arabidopsis thaliana (Mouse-ear cress)).